Reading from the N-terminus, the 215-residue chain is Protein GET1 (215 aa).

The Lumenal portion of the chain corresponds to 1–4 (MINL). A helical transmembrane segment spans residues 5–24 (ALVIFLCTLLNQIVSWVGKS). At 25 to 108 (VLQEIAFTAY…SFSKKFSTLL (84 aa)) the chain is on the cytoplasmic side. Positions 73–94 (AKLRRKLDKGLADLEKTNNTLS) form a coiled coil. A helical membrane pass occupies residues 109-129 (WLMTTGAQFLLSWWFRKQPIF). Over 130–153 (WLPEGWVPYPVAWLLSFPSAPIGS) the chain is Lumenal. A helical transmembrane segment spans residues 154-170 (VSSGAWGAICRRVLSTL). Residues 171-215 (QEIIQSLLAPSPAATGPVPTGPSSAKNDQPEAKIEALALEHEKLD) are Cytoplasmic-facing. Positions 182–202 (PAATGPVPTGPSSAKNDQPEA) are disordered.

The protein belongs to the WRB/GET1 family. Interacts with GET3.

Its subcellular location is the endoplasmic reticulum membrane. In terms of biological role, required for the post-translational delivery of tail-anchored (TA) proteins to the endoplasmic reticulum. Acts as a membrane receptor for soluble GET3, which recognizes and selectively binds the transmembrane domain of TA proteins in the cytosol. The sequence is that of Protein GET1 from Cryptococcus neoformans var. neoformans serotype D (strain JEC21 / ATCC MYA-565) (Filobasidiella neoformans).